A 256-amino-acid chain; its full sequence is Probable transcriptional regulatory protein cce_0894 (256 aa).

Belongs to the TACO1 family.

The protein resides in the cytoplasm. The polypeptide is Probable transcriptional regulatory protein cce_0894 (Crocosphaera subtropica (strain ATCC 51142 / BH68) (Cyanothece sp. (strain ATCC 51142))).